The chain runs to 206 residues: Large ribosomal subunit protein uL13w (206 aa).

This sequence belongs to the universal ribosomal protein uL13 family.

The chain is Large ribosomal subunit protein uL13w (RPL13AD) from Arabidopsis thaliana (Mouse-ear cress).